The chain runs to 331 residues: Ketol-acid reductoisomerase (NADP(+)) (331 aa).

One can recognise a KARI N-terminal Rossmann domain in the interval 2–181 (LEKYYDKDAD…GATRAVVFET (180 aa)). Residues 25-28 (YGSQ), arginine 48, serine 52, and 82-85 (DEQQ) each bind NADP(+). Residue histidine 107 is part of the active site. An NADP(+)-binding site is contributed by glycine 133. The KARI C-terminal knotted domain maps to 182 to 327 (SFREETETDL…KEIRATMPQF (146 aa)). Aspartate 190, glutamate 194, glutamate 226, and glutamate 230 together coordinate Mg(2+). Serine 251 is a binding site for substrate.

The protein belongs to the ketol-acid reductoisomerase family. Requires Mg(2+) as cofactor.

The catalysed reaction is (2R)-2,3-dihydroxy-3-methylbutanoate + NADP(+) = (2S)-2-acetolactate + NADPH + H(+). The enzyme catalyses (2R,3R)-2,3-dihydroxy-3-methylpentanoate + NADP(+) = (S)-2-ethyl-2-hydroxy-3-oxobutanoate + NADPH + H(+). The protein operates within amino-acid biosynthesis; L-isoleucine biosynthesis; L-isoleucine from 2-oxobutanoate: step 2/4. It participates in amino-acid biosynthesis; L-valine biosynthesis; L-valine from pyruvate: step 2/4. Functionally, involved in the biosynthesis of branched-chain amino acids (BCAA). Catalyzes an alkyl-migration followed by a ketol-acid reduction of (S)-2-acetolactate (S2AL) to yield (R)-2,3-dihydroxy-isovalerate. In the isomerase reaction, S2AL is rearranged via a Mg-dependent methyl migration to produce 3-hydroxy-3-methyl-2-ketobutyrate (HMKB). In the reductase reaction, this 2-ketoacid undergoes a metal-dependent reduction by NADPH to yield (R)-2,3-dihydroxy-isovalerate. This chain is Ketol-acid reductoisomerase (NADP(+)), found in Methanospirillum hungatei JF-1 (strain ATCC 27890 / DSM 864 / NBRC 100397 / JF-1).